A 418-amino-acid chain; its full sequence is NADH-quinone oxidoreductase subunit D (418 aa).

Belongs to the complex I 49 kDa subunit family. As to quaternary structure, NDH-1 is composed of 14 different subunits. Subunits NuoB, C, D, E, F, and G constitute the peripheral sector of the complex.

It localises to the cell inner membrane. It carries out the reaction a quinone + NADH + 5 H(+)(in) = a quinol + NAD(+) + 4 H(+)(out). Functionally, NDH-1 shuttles electrons from NADH, via FMN and iron-sulfur (Fe-S) centers, to quinones in the respiratory chain. The immediate electron acceptor for the enzyme in this species is believed to be ubiquinone. Couples the redox reaction to proton translocation (for every two electrons transferred, four hydrogen ions are translocated across the cytoplasmic membrane), and thus conserves the redox energy in a proton gradient. In Neisseria gonorrhoeae (strain ATCC 700825 / FA 1090), this protein is NADH-quinone oxidoreductase subunit D.